A 320-amino-acid chain; its full sequence is ATP-dependent 6-phosphofructokinase (320 aa).

Residue Gly12 participates in ATP binding. 22–26 provides a ligand contact to ADP; the sequence is RGVVR. Residues 73-74 and 103-106 contribute to the ATP site; these read RF and GDGS. Asp104 provides a ligand contact to Mg(2+). Residue 126–128 participates in substrate binding; the sequence is TID. The active-site Proton acceptor is the Asp128. An ADP-binding site is contributed by Arg155. Residues Arg163 and 170 to 172 contribute to the substrate site; that span reads MGR. ADP-binding positions include 186–188, Lys212, and 214–216; these read GCE and KKH. Substrate-binding positions include Glu223, Arg244, and 250–253; that span reads HIQR.

This sequence belongs to the phosphofructokinase type A (PFKA) family. ATP-dependent PFK group I subfamily. Prokaryotic clade 'B1' sub-subfamily. Homotetramer. Requires Mg(2+) as cofactor.

The protein localises to the cytoplasm. It carries out the reaction beta-D-fructose 6-phosphate + ATP = beta-D-fructose 1,6-bisphosphate + ADP + H(+). It functions in the pathway carbohydrate degradation; glycolysis; D-glyceraldehyde 3-phosphate and glycerone phosphate from D-glucose: step 3/4. Its activity is regulated as follows. Allosterically activated by ADP and other diphosphonucleosides, and allosterically inhibited by phosphoenolpyruvate. Functionally, catalyzes the phosphorylation of D-fructose 6-phosphate to fructose 1,6-bisphosphate by ATP, the first committing step of glycolysis. This chain is ATP-dependent 6-phosphofructokinase, found in Blochmanniella floridana.